A 212-amino-acid chain; its full sequence is Suppressor of cytokine signaling 1 (212 aa).

Positions 1 to 55 (MVARNQVAADNAISPAAEPRRRSEPSSSSSSSSPAAPVRPRPCPAVPAPAPGDTH) are disordered. A compositionally biased stretch (low complexity) spans 25–36 (PSSSSSSSSPAA). Pro residues predominate over residues 37-50 (PVRPRPCPAVPAPA). Residues 56 to 67 (FRTFRSHSDYRR) are kinase inhibitory region (KIR). An extended SH2 subdomain (ESS) region spans residues 68–79 (ITRTSALLDACG). Positions 80–175 (FYWGPLSVHG…PLRQRRVRPL (96 aa)) constitute an SH2 domain. The region spanning 162–211 (MLGAPLRQRRVRPLQELCRQRIVAAVGRENLARIPLNPVLRDYLSSFPFQ) is the SOCS box domain. Positions 174–183 (PLQELCRQRI) are interaction with Elongin BC complex.

The protein belongs to the SOCS1 family. In terms of assembly, interacts with multiple activated proteins of the tyrosine kinase signaling pathway including JAK family kinases, TEC, KIT, GRB2 and VAV. Binding to JAKs is mediated through the KIR and SH2 domain to a phosphorylated tyrosine residue within the JAK JH1 domain. Binds the SH3 domain of GRB2 via diproline determinants in the N-terminus, and the N-terminal regulatory domain of VAV. Interacts with the Elongin BC complex (ELOB and ELOC). Component of an ECS CBC(SOCS1) E3 ubiquitin-protein ligase complex which contains Elongin BC, CUL5, RBX1 and SOCS1. Interacts (via SH2 domain and SOCS box) with TRIM8. Interacts with CUL2. Interacts with AXL and FGFR3. Interacts with INSR. Interacts with TRIM8. Interacts with DCUN1D1. Interacts with IFNGR1. High expression in thymus. Lower expression in lung and spleen. Expressed in both Th1 and Th2 cells.

It localises to the nucleus. It is found in the cytoplasmic vesicle. It participates in protein modification; protein ubiquitination. Essential negative regulator of type I and type II interferon (IFN) signaling, as well as that of other cytokines, including IL2, IL4, IL6 and leukemia inhibitory factor (LIF). Downregulates cytokine signaling by inhibiting the JAK/STAT signaling pathway. Acts by binding to JAK proteins and to IFNGR1 and inhibiting their kinase activity. In vitro, suppresses Tec protein-tyrosine activity. Regulates IFN-gamma (IFNG)-mediated sensory neuron survival. Probable substrate recognition component of an ECS (Elongin BC-CUL2/5-SOCS-box protein) E3 ubiquitin ligase complex which mediates the ubiquitination and subsequent proteasomal degradation of target proteins. The protein is Suppressor of cytokine signaling 1 of Mus musculus (Mouse).